We begin with the raw amino-acid sequence, 333 residues long: Lipoyl synthase (333 aa).

Positions 55, 60, 66, 81, 85, 88, and 292 each coordinate [4Fe-4S] cluster. One can recognise a Radical SAM core domain in the interval 67 to 281; it reads WEDREATFLI…SAEAERLGFA (215 aa).

It belongs to the radical SAM superfamily. Lipoyl synthase family. It depends on [4Fe-4S] cluster as a cofactor.

It is found in the cytoplasm. The enzyme catalyses [[Fe-S] cluster scaffold protein carrying a second [4Fe-4S](2+) cluster] + N(6)-octanoyl-L-lysyl-[protein] + 2 oxidized [2Fe-2S]-[ferredoxin] + 2 S-adenosyl-L-methionine + 4 H(+) = [[Fe-S] cluster scaffold protein] + N(6)-[(R)-dihydrolipoyl]-L-lysyl-[protein] + 4 Fe(3+) + 2 hydrogen sulfide + 2 5'-deoxyadenosine + 2 L-methionine + 2 reduced [2Fe-2S]-[ferredoxin]. It participates in protein modification; protein lipoylation via endogenous pathway; protein N(6)-(lipoyl)lysine from octanoyl-[acyl-carrier-protein]: step 2/2. In terms of biological role, catalyzes the radical-mediated insertion of two sulfur atoms into the C-6 and C-8 positions of the octanoyl moiety bound to the lipoyl domains of lipoate-dependent enzymes, thereby converting the octanoylated domains into lipoylated derivatives. In Kineococcus radiotolerans (strain ATCC BAA-149 / DSM 14245 / SRS30216), this protein is Lipoyl synthase.